A 354-amino-acid polypeptide reads, in one-letter code: Methylthioribose-1-phosphate isomerase (354 aa).

Residues arginine 49–alanine 51, arginine 92, and glutamine 199 contribute to the substrate site. Aspartate 240 functions as the Proton donor in the catalytic mechanism. Asparagine 250–lysine 251 contacts substrate.

The protein belongs to the eIF-2B alpha/beta/delta subunits family. MtnA subfamily.

It carries out the reaction 5-(methylsulfanyl)-alpha-D-ribose 1-phosphate = 5-(methylsulfanyl)-D-ribulose 1-phosphate. The protein operates within amino-acid biosynthesis; L-methionine biosynthesis via salvage pathway; L-methionine from S-methyl-5-thio-alpha-D-ribose 1-phosphate: step 1/6. Catalyzes the interconversion of methylthioribose-1-phosphate (MTR-1-P) into methylthioribulose-1-phosphate (MTRu-1-P). The protein is Methylthioribose-1-phosphate isomerase of Koribacter versatilis (strain Ellin345).